Here is a 351-residue protein sequence, read N- to C-terminus: MQIASSPFTHNQRSTRSIMLLVILACIPGIIAQTYFFGYGSLIQVALAIMTAVLAEGAVLHLRKQPVLTRLQDNSALLTGLLLGISLPPLAPWWMIVLGTAFAIIIAKQLYGGLGQNPFNPAMVGYVVLLISFPVQMTSWLPPLPLQGTPVGFYDSLLTIFTGFTQNGADIHQLQIGYDGISQATPLDNFKTSLRSQPVEQILQQPIFTAGLAGIGWQWINLGFLAGGLLLLWRKAIHWHIPVSFLLALAGCAAISWMIAPHSFAPPMLHLFSGATMLGAFFIATDPVSASTTPRGRLIFGALIGILVWLIRVYGGYPDGVAFAVLLANICVPLIDHYTQPRVYGHQRGHK.

A run of 4 helical transmembrane segments spans residues 18-38 (IMLL…YFFG), 42-62 (LIQV…VLHL), 87-107 (LPPL…IIIA), and 121-141 (PAMV…TSWL). Thr-185 is subject to FMN phosphoryl threonine. The next 5 helical transmembrane spans lie at 212–232 (LAGI…LLLL), 241–261 (IPVS…MIAP), 264–284 (FAPP…FFIA), 298–318 (LIFG…GGYP), and 320–340 (GVAF…HYTQ).

The protein belongs to the NqrB/RnfD family. As to quaternary structure, the complex is composed of six subunits: RnfA, RnfB, RnfC, RnfD, RnfE and RnfG. FMN is required as a cofactor.

The protein localises to the cell inner membrane. Functionally, part of a membrane-bound complex that couples electron transfer with translocation of ions across the membrane. This Yersinia enterocolitica serotype O:8 / biotype 1B (strain NCTC 13174 / 8081) protein is Ion-translocating oxidoreductase complex subunit D.